Consider the following 530-residue polypeptide: Phosphoenolpyruvate carboxykinase (ATP) (530 aa).

Substrate is bound by residues arginine 58, tyrosine 195, and lysine 201. ATP-binding positions include lysine 201, histidine 220, and 236–244 (GLSGTGKTT). Mn(2+) contacts are provided by lysine 201 and histidine 220. Residue aspartate 257 participates in Mn(2+) binding. Residues glutamate 285, arginine 321, 440–441 (RI), and threonine 446 each bind ATP. Arginine 321 serves as a coordination point for substrate.

This sequence belongs to the phosphoenolpyruvate carboxykinase (ATP) family. Mn(2+) is required as a cofactor.

It localises to the cytoplasm. The enzyme catalyses oxaloacetate + ATP = phosphoenolpyruvate + ADP + CO2. Its pathway is carbohydrate biosynthesis; gluconeogenesis. Involved in the gluconeogenesis. Catalyzes the conversion of oxaloacetate (OAA) to phosphoenolpyruvate (PEP) through direct phosphoryl transfer between the nucleoside triphosphate and OAA. In Staphylococcus epidermidis (strain ATCC 35984 / DSM 28319 / BCRC 17069 / CCUG 31568 / BM 3577 / RP62A), this protein is Phosphoenolpyruvate carboxykinase (ATP).